Here is a 94-residue protein sequence, read N- to C-terminus: Small ribosomal subunit protein uS19c (94 aa).

It belongs to the universal ribosomal protein uS19 family.

It localises to the plastid. Its subcellular location is the chloroplast. In terms of biological role, protein S19 forms a complex with S13 that binds strongly to the 16S ribosomal RNA. This Pleurastrum terricola (Filamentous green alga) protein is Small ribosomal subunit protein uS19c.